The chain runs to 59 residues: Potassium channel toxin alpha-KTx 16.2 (59 aa).

An N-terminal signal peptide occupies residues 1-22; the sequence is MKIFSILLVALIICSISICTEA. Disulfide bonds link Cys-30-Cys-51, Cys-36-Cys-56, and Cys-40-Cys-58.

This sequence belongs to the short scorpion toxin superfamily. Potassium channel inhibitor family. Alpha-KTx 16 subfamily. As to expression, expressed by the venom gland.

It localises to the secreted. Functionally, alpha-KTx 16.2: inhibits large conductance calcium-activated potassium channels (KCa1.1/Slo-beta4 KCNMA1/KCNMB4). It appears to block channel activity by a simple bimolecular inhibition process. Shows a fast association rate and a slow dissociation rate of binding on rat brain synaptosome. Significantly inhibits voltage-dependent sodium current and voltage-dependent delayed rectifier potassium currents. Significantly inhibits voltage-dependent sodium current (Nav) and voltage-dependent delayed rectifier potassium current. The sequence is that of Potassium channel toxin alpha-KTx 16.2 from Olivierus martensii (Manchurian scorpion).